The sequence spans 263 residues: Endonuclease 8 (263 aa).

The Schiff-base intermediate with DNA role is filled by Pro2. Residue Glu3 is the Proton donor of the active site. Lys53 functions as the Proton donor; for beta-elimination activity in the catalytic mechanism. DNA-binding residues include Gln70, Arg125, and Asn169. Residues 229 to 263 (KVFHRDGELCERCGGIIEKTTLSSRPFYWCPGCQH) form an FPG-type zinc finger. Arg253 (proton donor; for delta-elimination activity) is an active-site residue.

This sequence belongs to the FPG family. It depends on Zn(2+) as a cofactor.

The catalysed reaction is 2'-deoxyribonucleotide-(2'-deoxyribose 5'-phosphate)-2'-deoxyribonucleotide-DNA = a 3'-end 2'-deoxyribonucleotide-(2,3-dehydro-2,3-deoxyribose 5'-phosphate)-DNA + a 5'-end 5'-phospho-2'-deoxyribonucleoside-DNA + H(+). Its function is as follows. Involved in base excision repair of DNA damaged by oxidation or by mutagenic agents. Acts as a DNA glycosylase that recognizes and removes damaged bases. Has a preference for oxidized pyrimidines, such as thymine glycol, 5,6-dihydrouracil and 5,6-dihydrothymine. Has AP (apurinic/apyrimidinic) lyase activity and introduces nicks in the DNA strand. Cleaves the DNA backbone by beta-delta elimination to generate a single-strand break at the site of the removed base with both 3'- and 5'-phosphates. The chain is Endonuclease 8 from Escherichia coli O157:H7.